A 212-amino-acid polypeptide reads, in one-letter code: ER lumen protein-retaining receptor 2 (212 aa).

Topologically, residues 1–4 (MNIF) are lumenal. Residues 5 to 24 (RLTGDLSHLAAIVILLLKIW) form a helical membrane-spanning segment. At 25-32 (KTRSCAGI) the chain is on the cytoplasmic side. The helical transmembrane segment at 33-52 (SGKSQLLFALVFTTRYLDLF) threads the bilayer. The interval 47–48 (RY) is interaction with the K-D-E-L motif on target proteins. At 53–58 (TSFISL) the chain is on the lumenal side. A helical transmembrane segment spans residues 59-79 (YNTSMKVIYLACSYATVYLIY). Topologically, residues 80–92 (LKFKATYDGNHDT) are cytoplasmic. A helical transmembrane segment spans residues 93-110 (FRVEFLVVPVGGLSFLVN). Residues 111–116 (HDFSPL) are Lumenal-facing. Residues 117-135 (EILWTFSIYLESVAILPQL) traverse the membrane as a helical segment. At 136–149 (FMISKTGEAETITT) the chain is on the cytoplasmic side. A helical transmembrane segment spans residues 150-168 (HYLFFLGLYRALYLVNWIW). Residues 159 to 169 (RALYLVNWIWR) are interaction with the K-D-E-L motif on target proteins. Over 169-178 (RFYFEGFFDL) the chain is Lumenal. Residues 179–199 (IAVVAGVVQTILYCDFFYLYI) form a helical membrane-spanning segment. Residues 200–212 (TKVLKGKKLSLPA) are Cytoplasmic-facing. The tract at residues 204-207 (KGKK) is important for recycling of cargo proteins with the sequence motif K-D-E-L from the Golgi to the endoplasmic reticulum.

This sequence belongs to the ERD2 family.

It is found in the endoplasmic reticulum membrane. The protein resides in the golgi apparatus membrane. It localises to the cytoplasmic vesicle. The protein localises to the COPI-coated vesicle membrane. Its function is as follows. Membrane receptor that binds the K-D-E-L sequence motif in the C-terminal part of endoplasmic reticulum resident proteins and maintains their localization in that compartment by participating to their vesicle-mediated recycling back from the Golgi. Binding is pH dependent, and is optimal at pH 5-5.4. This is ER lumen protein-retaining receptor 2 (KDELR2) from Homo sapiens (Human).